Consider the following 631-residue polypeptide: Polyadenylate-binding protein 3 (631 aa).

RRM domains follow at residues 11–89 (ASLY…WSQR), 99–175 (GNIF…QFKS), 191–268 (PNVY…RAQK), and 294–370 (VNLY…LAQR). At Tyr-140 the chain carries Phosphotyrosine. Ser-315 bears the Phosphoserine mark. Residue Lys-361 is modified to N6,N6-dimethyllysine; alternate. Residue Lys-361 forms a Glycyl lysine isopeptide (Lys-Gly) (interchain with G-Cter in SUMO2); alternate linkage. Tyr-364 carries the post-translational modification Phosphotyrosine. Omega-N-methylarginine is present on residues Arg-426, Arg-430, and Arg-449. Position 501 is a dimethylated arginine (Arg-501). At Arg-513 the chain carries Omega-N-methylarginine. Residues 537–614 (QETLTASRLA…AVAVLQAHQA (78 aa)) enclose the PABC domain.

It belongs to the polyadenylate-binding protein type-1 family. As to expression, testis specific.

It is found in the cytoplasm. Binds the poly(A) tail of mRNA. May be involved in cytoplasmic regulatory processes of mRNA metabolism. Binds poly(A) with a slightly lower affinity as compared to PABPC1. This chain is Polyadenylate-binding protein 3 (PABPC3), found in Homo sapiens (Human).